The primary structure comprises 194 residues: Large ribosomal subunit protein eL15 (194 aa).

The tract at residues serine 164–lysine 194 is disordered. The span at lysine 167–glycine 176 shows a compositional bias: basic residues. Basic and acidic residues predominate over residues lysine 177 to lysine 194.

This sequence belongs to the eukaryotic ribosomal protein eL15 family.

The sequence is that of Large ribosomal subunit protein eL15 (rpl15e) from Pyrococcus abyssi (strain GE5 / Orsay).